The primary structure comprises 879 residues: Alanine--tRNA ligase (879 aa).

4 residues coordinate Zn(2+): histidine 566, histidine 570, cysteine 668, and histidine 672.

It belongs to the class-II aminoacyl-tRNA synthetase family. It depends on Zn(2+) as a cofactor.

Its subcellular location is the cytoplasm. It catalyses the reaction tRNA(Ala) + L-alanine + ATP = L-alanyl-tRNA(Ala) + AMP + diphosphate. In terms of biological role, catalyzes the attachment of alanine to tRNA(Ala) in a two-step reaction: alanine is first activated by ATP to form Ala-AMP and then transferred to the acceptor end of tRNA(Ala). Also edits incorrectly charged Ser-tRNA(Ala) and Gly-tRNA(Ala) via its editing domain. This chain is Alanine--tRNA ligase, found in Halalkalibacterium halodurans (strain ATCC BAA-125 / DSM 18197 / FERM 7344 / JCM 9153 / C-125) (Bacillus halodurans).